A 459-amino-acid chain; its full sequence is uncharacterized protein (459 aa).

Positions 9–67 constitute a TRAM domain; that stretch reads KLEVGQTFPVTIKRLGINGEGVGYFKRQVVFIPGALPGEEVVAETTKIQRGFAEAKVKK. [4Fe-4S] cluster is bound by residues cysteine 80, cysteine 86, cysteine 89, and cysteine 168. S-adenosyl-L-methionine is bound by residues glutamine 292, tyrosine 321, aspartate 342, and aspartate 390. Residue cysteine 417 is the Nucleophile of the active site.

It belongs to the class I-like SAM-binding methyltransferase superfamily. RNA M5U methyltransferase family.

This is an uncharacterized protein from Bacillus cereus (strain ATCC 10987 / NRS 248).